Here is a 104-residue protein sequence, read N- to C-terminus: Pyrimidine/purine nucleoside phosphorylase (104 aa).

This sequence belongs to the nucleoside phosphorylase PpnP family.

The catalysed reaction is a purine D-ribonucleoside + phosphate = a purine nucleobase + alpha-D-ribose 1-phosphate. It carries out the reaction adenosine + phosphate = alpha-D-ribose 1-phosphate + adenine. The enzyme catalyses cytidine + phosphate = cytosine + alpha-D-ribose 1-phosphate. It catalyses the reaction guanosine + phosphate = alpha-D-ribose 1-phosphate + guanine. The catalysed reaction is inosine + phosphate = alpha-D-ribose 1-phosphate + hypoxanthine. It carries out the reaction thymidine + phosphate = 2-deoxy-alpha-D-ribose 1-phosphate + thymine. The enzyme catalyses uridine + phosphate = alpha-D-ribose 1-phosphate + uracil. It catalyses the reaction xanthosine + phosphate = alpha-D-ribose 1-phosphate + xanthine. In terms of biological role, catalyzes the phosphorolysis of diverse nucleosides, yielding D-ribose 1-phosphate and the respective free bases. Can use uridine, adenosine, guanosine, cytidine, thymidine, inosine and xanthosine as substrates. Also catalyzes the reverse reactions. The sequence is that of Pyrimidine/purine nucleoside phosphorylase from Syntrophotalea carbinolica (strain DSM 2380 / NBRC 103641 / GraBd1) (Pelobacter carbinolicus).